A 165-amino-acid chain; its full sequence is 2-halobenzoate 1,2-dioxygenase small subunit (165 aa).

This sequence belongs to the bacterial ring-hydroxylating dioxygenase beta subunit family. Heterohexamer of 3 large (CbdA) subunits and 3 small (CbdB) subunits. The heterohexamer is part of 2-halobenzoate dioxygenase two component enzyme system. The other component is a NADH:acceptor reductase (CdbC).

It catalyses the reaction a 2-halobenzoate + NADH + O2 + H(+) = a halide anion + catechol + CO2 + NAD(+). It functions in the pathway xenobiotic degradation; benzoate degradation via CoA ligation. Its function is as follows. Component of 2-halobenzoate dioxygenase multicomponent enzyme system which catalyzes the incorporation of both atoms of molecular oxygen into 2-halobenzoate to form catechol. This is 2-halobenzoate 1,2-dioxygenase small subunit (cbdB) from Burkholderia cepacia (Pseudomonas cepacia).